Here is an 866-residue protein sequence, read N- to C-terminus: DNA mismatch repair protein MutS (866 aa).

613–620 (GPNMGGKS) serves as a coordination point for ATP.

This sequence belongs to the DNA mismatch repair MutS family.

In terms of biological role, this protein is involved in the repair of mismatches in DNA. It is possible that it carries out the mismatch recognition step. This protein has a weak ATPase activity. The sequence is that of DNA mismatch repair protein MutS from Haemophilus ducreyi (strain 35000HP / ATCC 700724).